We begin with the raw amino-acid sequence, 379 residues long: uncharacterized protein (379 aa).

Disordered stretches follow at residues M1 to P20, V227 to H290, and P331 to H371. Residues Q7–P20 show a composition bias toward low complexity. Positions G249 to R261 are enriched in basic and acidic residues.

This is an uncharacterized protein from Dryophytes versicolor (chameleon treefrog).